The primary structure comprises 1091 residues: ATP-citrate synthase (1091 aa).

In terms of domain architecture, ATP-grasp spans 4 to 265 (KAISEQTGKE…LDAKSGASLK (262 aa)). K58, R66, G67, P109, V111, and E118 together coordinate ATP. Y131 bears the Phosphotyrosine mark. D216 lines the ATP pocket. Mg(2+)-binding residues include D257, S260, and A262. S263 bears the Phosphoserine mark. G309, N346, T348, Y364, and R379 together coordinate citrate. The span at 442–457 (SGSTSTPAPSRTASFS) shows a compositional bias: low complexity. The segment at 442–478 (SGSTSTPAPSRTASFSESRADEVAPAKKAKPAMPQGK) is disordered. Residue T447 is modified to Phosphothreonine. Residue S451 is modified to Phosphoserine. S455 carries the post-translational modification Phosphoserine; by PKA and PKB/AKT1 or PKB/AKT2 or BCKDK. Residue S459 is modified to Phosphoserine. 3 positions are modified to N6-acetyllysine; alternate: K530, K536, and K544. Residues K530, K536, and K544 each participate in a glycyl lysine isopeptide (Lys-Gly) (interchain with G-Cter in ubiquitin); alternate cross-link. A Phosphothreonine modification is found at T629. S653 carries the post-translational modification Phosphoserine. Y672 is modified (phosphotyrosine). Residue H750 is the Tele-phosphohistidine intermediate of the active site. Residue 769-779 (LKEAGVFVPRS) participates in CoA binding. S829 carries the post-translational modification Phosphoserine. An N6-acetyllysine mark is found at K938, K958, K968, and K1067. S1090 bears the Phosphoserine mark.

The protein in the N-terminal section; belongs to the succinate/malate CoA ligase beta subunit family. This sequence in the C-terminal section; belongs to the succinate/malate CoA ligase alpha subunit family. As to quaternary structure, homotetramer. The cofactor is Mg(2+). Phosphorylated by PKA and GSK3 in a sequential manner; phosphorylation results in activation of its activity. Phosphorylation on Thr-447 and Ser-451 depends on the phosphorylation state of Ser-455. Phosphorylation on Ser-455 is decreased by prior phosphorylation on the other 2 residues. Phosphorylated at Ser-455 by BCKDK and dephosphorylated by protein phosphatase PPM1K. Post-translationally, ISGylated. In terms of processing, acetylated at Lys-530, Lys-536 and Lys-544 by KAT2B/PCAF. Acetylation is promoted by glucose and stabilizes the protein, probably by preventing ubiquitination at the same sites. Acetylation promotes de novo lipid synthesis. Deacetylated by SIRT2. Ubiquitinated at Lys-530, Lys-536 and Lys-544 by the BCR(KLHL25) E3 ubiquitin ligase complex and UBR4, leading to its degradation. Ubiquitination is probably inhibited by acetylation at same site. BCR(KLHL25)-mediated degradation of ACLY promotes fatty acid oxidation and is required for differentiation of inducible regulatory T (iTreg) cells.

Its subcellular location is the cytoplasm. It localises to the cytosol. It catalyses the reaction oxaloacetate + acetyl-CoA + ADP + phosphate = citrate + ATP + CoA. Its activity is regulated as follows. Phosphorylation results in activation of its activity. Glucose 6-phosphate, fructose 6-phosphate, fructose 2,6-bisphosphate, ribulose 5-phosphate, and fructose 1,6-bisphosphate also act as activators. Functionally, catalyzes the cleavage of citrate into oxaloacetate and acetyl-CoA, the latter serving as common substrate in multiple biochemical reactions in protein, carbohydrate and lipid metabolism. This is ATP-citrate synthase (Acly) from Mus musculus (Mouse).